Reading from the N-terminus, the 199-residue chain is IMP cyclohydrolase (199 aa).

This sequence belongs to the archaeal IMP cyclohydrolase family.

It catalyses the reaction IMP + H2O = 5-formamido-1-(5-phospho-D-ribosyl)imidazole-4-carboxamide. It functions in the pathway purine metabolism; IMP biosynthesis via de novo pathway; IMP from 5-formamido-1-(5-phospho-D-ribosyl)imidazole-4-carboxamide: step 1/1. Its function is as follows. Catalyzes the cyclization of 5-formylamidoimidazole-4-carboxamide ribonucleotide to IMP. In Methanothrix thermoacetophila (strain DSM 6194 / JCM 14653 / NBRC 101360 / PT) (Methanosaeta thermophila), this protein is IMP cyclohydrolase.